The primary structure comprises 211 residues: Large ribosomal subunit protein uL4 (211 aa).

The interval 44 to 90 (ERQGTHSTLTKGEVRGGGKKPWRQKHTGKARTGSTRNPHWTGGGVVF) is disordered. Residues 60-72 (GGKKPWRQKHTGK) are compositionally biased toward basic residues.

It belongs to the universal ribosomal protein uL4 family. In terms of assembly, part of the 50S ribosomal subunit.

One of the primary rRNA binding proteins, this protein initially binds near the 5'-end of the 23S rRNA. It is important during the early stages of 50S assembly. It makes multiple contacts with different domains of the 23S rRNA in the assembled 50S subunit and ribosome. Functionally, forms part of the polypeptide exit tunnel. The chain is Large ribosomal subunit protein uL4 from Ureaplasma parvum serovar 3 (strain ATCC 27815 / 27 / NCTC 11736).